Consider the following 128-residue polypeptide: Histone H2A (128 aa).

The tract at residues 1–22 (MSGRGKTGGKARAKAKTRSSRA) is disordered. Serine 2 carries the post-translational modification N-acetylserine. Residue serine 2 is modified to Phosphoserine. Lysine 6 bears the N6-(2-hydroxyisobutyryl)lysine mark. Lysine 6 is modified (N6-acetyllysine). The span at 7-19 (TGGKARAKAKTRS) shows a compositional bias: basic residues. Lysine 10 is subject to N6-(2-hydroxyisobutyryl)lysine; alternate. The residue at position 10 (lysine 10) is an N6-lactoyllysine; alternate. An N6-succinyllysine modification is found at lysine 10. Residues lysine 14 and lysine 16 each participate in a glycyl lysine isopeptide (Lys-Gly) (interchain with G-Cter in ubiquitin) cross-link. Lysine 37 is modified (N6-(2-hydroxyisobutyryl)lysine; alternate). 2 positions are modified to N6-(2-hydroxyisobutyryl)lysine: lysine 75 and lysine 76. The residue at position 96 (lysine 96) is an N6-(2-hydroxyisobutyryl)lysine; alternate. Lysine 96 carries the N6-succinyllysine modification. Position 96 is an N6-glutaryllysine; alternate (lysine 96). N5-methylglutamine is present on glutamine 105. Lysine 119 is subject to N6-(2-hydroxyisobutyryl)lysine; alternate. 3 positions are modified to N6-glutaryllysine; alternate: lysine 119, lysine 120, and lysine 126. Lysine 120 is covalently cross-linked (Glycyl lysine isopeptide (Lys-Gly) (interchain with G-Cter in ubiquitin)).

The nucleosome is a histone octamer containing two molecules each of H2A, H2B, H3 and H4 assembled in one H3-H4 heterotetramer and two H2A-H2B heterodimers. The octamer wraps approximately 147 bp of DNA. In terms of processing, monoubiquitination of Lys-120 (H2AK119Ub) gives a specific tag for epigenetic transcriptional repression. Following DNA double-strand breaks (DSBs), it is ubiquitinated through 'Lys-63' linkage of ubiquitin moieties, leading to the recruitment of repair proteins to sites of DNA damage. H2AK119Ub and ionizing radiation-induced 'Lys-63'-linked ubiquitination are distinct events. Post-translationally, phosphorylation on Ser-2 is enhanced during mitosis. Phosphorylation on Ser-2 directly represses transcription. Glutamine methylation at Gln-105 (H2AQ104me) by FBL is specifically dedicated to polymerase I. It is present at 35S ribosomal DNA locus and impairs binding of the FACT complex. In terms of tissue distribution, expressed and secreted by skin epithelium.

The protein resides in the nucleus. The protein localises to the chromosome. Core component of nucleosome. Nucleosomes wrap and compact DNA into chromatin, limiting DNA accessibility to the cellular machineries which require DNA as a template. Histones thereby play a central role in transcription regulation, DNA repair, DNA replication and chromosomal stability. DNA accessibility is regulated via a complex set of post-translational modifications of histones, also called histone code, and nucleosome remodeling. In terms of biological role, the secreted form has antibacterial activity against Gram-positive bacteria and antifungal activity against S.cerevisiae. In Oncorhynchus mykiss (Rainbow trout), this protein is Histone H2A.